A 456-amino-acid polypeptide reads, in one-letter code: Bifunctional protein GlmU (456 aa).

The interval 1-229 (MYNCAIILAA…FEETMGVNSR (229 aa)) is pyrophosphorylase. Residues 8–11 (LAAG), Lys22, Gln73, and 78–79 (GT) each bind UDP-N-acetyl-alpha-D-glucosamine. A Mg(2+)-binding site is contributed by Asp103. Positions 140, 155, 170, and 227 each coordinate UDP-N-acetyl-alpha-D-glucosamine. A Mg(2+)-binding site is contributed by Asn227. A linker region spans residues 230-250 (VQLAEAEKIMRNRINKIHMEN). Residues 251–456 (GVTLIDHNNT…SWVYKKGLKK (206 aa)) form an N-acetyltransferase region. Positions 332 and 350 each coordinate UDP-N-acetyl-alpha-D-glucosamine. Residue His362 is the Proton acceptor of the active site. Tyr365 and Asn376 together coordinate UDP-N-acetyl-alpha-D-glucosamine. Acetyl-CoA-binding positions include 385–386 (NY), Ala422, and Arg439.

The protein in the N-terminal section; belongs to the N-acetylglucosamine-1-phosphate uridyltransferase family. It in the C-terminal section; belongs to the transferase hexapeptide repeat family. In terms of assembly, homotrimer. It depends on Mg(2+) as a cofactor.

Its subcellular location is the cytoplasm. The enzyme catalyses alpha-D-glucosamine 1-phosphate + acetyl-CoA = N-acetyl-alpha-D-glucosamine 1-phosphate + CoA + H(+). It carries out the reaction N-acetyl-alpha-D-glucosamine 1-phosphate + UTP + H(+) = UDP-N-acetyl-alpha-D-glucosamine + diphosphate. It participates in nucleotide-sugar biosynthesis; UDP-N-acetyl-alpha-D-glucosamine biosynthesis; N-acetyl-alpha-D-glucosamine 1-phosphate from alpha-D-glucosamine 6-phosphate (route II): step 2/2. Its pathway is nucleotide-sugar biosynthesis; UDP-N-acetyl-alpha-D-glucosamine biosynthesis; UDP-N-acetyl-alpha-D-glucosamine from N-acetyl-alpha-D-glucosamine 1-phosphate: step 1/1. The protein operates within bacterial outer membrane biogenesis; LPS lipid A biosynthesis. Functionally, catalyzes the last two sequential reactions in the de novo biosynthetic pathway for UDP-N-acetylglucosamine (UDP-GlcNAc). The C-terminal domain catalyzes the transfer of acetyl group from acetyl coenzyme A to glucosamine-1-phosphate (GlcN-1-P) to produce N-acetylglucosamine-1-phosphate (GlcNAc-1-P), which is converted into UDP-GlcNAc by the transfer of uridine 5-monophosphate (from uridine 5-triphosphate), a reaction catalyzed by the N-terminal domain. The chain is Bifunctional protein GlmU from Clostridium kluyveri (strain NBRC 12016).